Consider the following 514-residue polypeptide: Cilia- and flagella-associated protein 53 (514 aa).

Residues 207–429 (EDRLAKERRE…ERINEGLKEL (223 aa)) adopt a coiled-coil conformation.

Belongs to the CFAP53 family. Microtubule inner protein component of sperm flagellar doublet microtubules. Interacts with PIERCE1 and PIERCE2; the interactions link outer dynein arms docking complex (ODA-DC) to the internal microtubule inner proteins (MIP) in cilium axoneme. Interacts with CCDC38. Interacts with CCDC42 and IFT88. Interacts with centriolar satellite proteins PIBF1/CEP90 and PCM1. Interacts with dyneins DNAIC1, DNAIC2 AND DNAH11 and with ODA-DC component ODAD4/TTC25. As to expression, expressed in trachea multiciliated cells.

It localises to the cytoplasm. Its subcellular location is the cytoskeleton. The protein resides in the cilium axoneme. The protein localises to the flagellum axoneme. It is found in the microtubule organizing center. It localises to the centrosome. Its subcellular location is the centriolar satellite. The protein resides in the spindle pole. Functionally, microtubule inner protein (MIP) part of the dynein-decorated doublet microtubules (DMTs) in cilia axoneme, which is required for motile cilia beating. Regulates motility patterns of both 9+0 and 9+2 motile cilia through differential localization and recruitment of axonemal dynein components. Required for centriolar satellite integrity and non-motile cilium assembly. Required for motile cilium formation. Through its role in beating of primary cilia, involved in the establishment of organ laterality during embryogenesis. Required for sperm flagellum biogenesis and is essential for male fertility. In Bos taurus (Bovine), this protein is Cilia- and flagella-associated protein 53 (CFAP53).